A 114-amino-acid chain; its full sequence is Period circadian protein (114 aa).

The interval 23–114 (VTNTSIAGTG…VTLTESLLNK (92 aa)) is disordered. 14 repeat units span residues 30-31 (GT), 33-34 (GT), 36-37 (GT), 38-39 (GT), 40-41 (GT), 42-43 (GT), 44-45 (GT), 46-47 (GT), 48-49 (GT), 50-51 (GT), 52-53 (GT), 54-55 (GT), 56-57 (GT), and 58-59 (GT). Over residues 30 to 79 (GTGGTGGTGTGTGTGTGTGTGTGTGTGTGTDTGTGTGTGTETGTGTGTGT) the composition is skewed to gly residues. The 28 X 2 AA approximate tandem repeats of G-[TN] stretch occupies residues 30–87 (GTGGTGGTGTGTGTGTGTGTGTGTGTGTGTDTGTGTGTGTETGTGTGTGTRNGTNSGT). A 15; approximate repeat occupies 60 to 61 (DT). Repeat copies occupy residues 62-63 (GT), 64-65 (GT), 66-67 (GT), and 68-69 (GT). The stretch at 70 to 71 (ET) is one 20; approximate repeat. Tandem repeats lie at residues 72 to 73 (GT), 74 to 75 (GT), 76 to 77 (GT), and 78 to 79 (GT). The stretch at 80–81 (RN) is one 25; approximate repeat. A compositionally biased stretch (low complexity) spans 80–91 (RNGTNSGTKTGT). Residues 82–83 (GT) form repeat 26. The 27; approximate repeat unit spans residues 84–85 (NS). Residues 86-87 (GT) form repeat 28. A compositionally biased stretch (polar residues) spans 105-114 (VTLTESLLNK).

Forms a heterodimer with timeless (TIM); the complex then translocates into the nucleus. In terms of processing, phosphorylated with a circadian rhythmicity, probably by the double-time protein (dbt). Phosphorylation could be implicated in the stability of per monomer and in the formation of heterodimer per-tim.

Its subcellular location is the nucleus. It localises to the cytoplasm. The protein localises to the perinuclear region. Its function is as follows. Essential for biological clock functions. Determines the period length of circadian and ultradian rhythms; an increase in PER dosage leads to shortened circadian rhythms and a decrease leads to lengthened circadian rhythms. Essential for the circadian rhythmicity of locomotor activity, eclosion behavior, and for the rhythmic component of the male courtship song that originates in the thoracic nervous system. The biological cycle depends on the rhythmic formation and nuclear localization of the TIM-PER complex. Light induces the degradation of TIM, which promotes elimination of PER. Nuclear activity of the heterodimer coordinatively regulates PER and TIM transcription through a negative feedback loop. Behaves as a negative element in circadian transcriptional loop. Does not appear to bind DNA, suggesting indirect transcriptional inhibition. In Drosophila orena (Fruit fly), this protein is Period circadian protein (per).